A 301-amino-acid polypeptide reads, in one-letter code: uncharacterized protein (301 aa).

The HTH lysR-type domain occupies 1 to 58; that stretch reads MDIRHLTYFLEVARLKSFTKASQSLYVSQPTISKMIKNLEEELGIELFYRNGRQVELT. Positions 18 to 37 form a DNA-binding region, H-T-H motif; that stretch reads FTKASQSLYVSQPTISKMIK.

The protein belongs to the LysR transcriptional regulatory family.

This is an uncharacterized protein from Bacillus subtilis (strain 168).